The following is a 264-amino-acid chain: Phosphate import ATP-binding protein PstB (264 aa).

In terms of domain architecture, ABC transporter spans 11–250 (LKAEALSVYY…DTTEKIFDSP (240 aa)). ATP is bound at residue 43-50 (GPSGCGKS).

The protein belongs to the ABC transporter superfamily. Phosphate importer (TC 3.A.1.7) family. The complex is composed of two ATP-binding proteins (PstB), two transmembrane proteins (PstC and PstA) and a solute-binding protein (PstS).

The protein localises to the cell inner membrane. It catalyses the reaction phosphate(out) + ATP + H2O = ADP + 2 phosphate(in) + H(+). Part of the ABC transporter complex PstSACB involved in phosphate import. Responsible for energy coupling to the transport system. This chain is Phosphate import ATP-binding protein PstB, found in Synechococcus sp. (strain ATCC 27144 / PCC 6301 / SAUG 1402/1) (Anacystis nidulans).